The chain runs to 347 residues: MDENKKKALEAALGQIEKQFGKGSIMRMGDKGAIRDIDSVSTGSLGLDVALGIGGLPRGRVVEIYGPESSGKTTLTLHAIAEMQKMGGTAAFVDAEHALDPIYAEKLGVDIDNLLVSQPDTGEQALEITDSLVRSGAVDIVIVDSVAALTPKAEIEGDMGDSHMGLQARLMSQALRKLTANIKRTNTLVIFINQIRMKIGVMFGNPETTTGGNALKFYSSVRLDIRRIGAIKKGDEILGNETRVKVVKNKVSPPFKQVEFEILYGQGISREGEVIDLGVKEKLIEKAGAWYSYQGQKIGQGKDNVRQFLKDNPDIYETLQVQIKERLMPKPNAPKATDEALDETGTD.

Residue 66-73 coordinates ATP; that stretch reads GPESSGKT. The interval 328–347 is disordered; sequence MPKPNAPKATDEALDETGTD.

The protein belongs to the RecA family.

The protein localises to the cytoplasm. Functionally, can catalyze the hydrolysis of ATP in the presence of single-stranded DNA, the ATP-dependent uptake of single-stranded DNA by duplex DNA, and the ATP-dependent hybridization of homologous single-stranded DNAs. It interacts with LexA causing its activation and leading to its autocatalytic cleavage. The polypeptide is Protein RecA (Hydrogenovibrio crunogenus (strain DSM 25203 / XCL-2) (Thiomicrospira crunogena)).